The primary structure comprises 742 residues: Serine/threonine-protein kinase SKY1 (742 aa).

Residues 13-146 form a disordered region; sequence KSAHLADTST…KDYRPGGYHP (134 aa). A compositionally biased stretch (polar residues) spans 19-35; it reads DTSTDASISCEEATSSQ. The segment covering 56–73 has biased composition (low complexity); sequence TKSKLSLALQTSKSSSSA. Residues 81-101 show a composition bias toward basic and acidic residues; it reads TSSKTEDFSTKSIKKKPDSGV. A compositionally biased stretch (low complexity) spans 106–127; sequence SIQSDSGPQSDSDLDSDSSISS. Residues 128–140 show a composition bias toward basic and acidic residues; that stretch reads CDERNEESLKDYR. The 549-residue stretch at 158–706 folds into the Protein kinase domain; it reads YILVRKLGWG…AGGLVNHPWL (549 aa). ATP-binding positions include 164–172 and K187; that span reads LGWGHFSTV. D294 serves as the catalytic Proton acceptor. T383 and T386 each carry phosphothreonine. 8 positions are modified to phosphoserine: S388, S393, S410, S427, S432, S445, S449, and S453. The disordered stretch occupies residues 459–491; that stretch reads INEDSNDNNNNDNSKNKNNNNNNSNNNNNEDIM. Residues 465–489 show a composition bias toward low complexity; the sequence is DNNNNDNSKNKNNNNNNSNNNNNED.

Belongs to the protein kinase superfamily. Ser/Thr protein kinase family.

It carries out the reaction L-seryl-[protein] + ATP = O-phospho-L-seryl-[protein] + ADP + H(+). The catalysed reaction is L-threonyl-[protein] + ATP = O-phospho-L-threonyl-[protein] + ADP + H(+). Functionally, constitutively active kinase, specifically and sequentially phosphorylates serine/arginine (SR)-type shuttling mRNA binding proteins in their RS dipeptide repeats. In Saccharomyces cerevisiae (strain ATCC 204508 / S288c) (Baker's yeast), this protein is Serine/threonine-protein kinase SKY1 (SKY1).